A 468-amino-acid chain; its full sequence is 3-isopropylmalate dehydratase large subunit (468 aa).

[4Fe-4S] cluster is bound by residues cysteine 347, cysteine 407, and cysteine 410.

The protein belongs to the aconitase/IPM isomerase family. LeuC type 1 subfamily. As to quaternary structure, heterodimer of LeuC and LeuD. [4Fe-4S] cluster is required as a cofactor.

The enzyme catalyses (2R,3S)-3-isopropylmalate = (2S)-2-isopropylmalate. The protein operates within amino-acid biosynthesis; L-leucine biosynthesis; L-leucine from 3-methyl-2-oxobutanoate: step 2/4. Functionally, catalyzes the isomerization between 2-isopropylmalate and 3-isopropylmalate, via the formation of 2-isopropylmaleate. The sequence is that of 3-isopropylmalate dehydratase large subunit from Prochlorococcus marinus (strain SARG / CCMP1375 / SS120).